A 355-amino-acid polypeptide reads, in one-letter code: UDP-N-acetylglucosamine--N-acetylmuramyl-(pentapeptide) pyrophosphoryl-undecaprenol N-acetylglucosamine transferase (355 aa).

UDP-N-acetyl-alpha-D-glucosamine contacts are provided by residues 14 to 16, asparagine 126, arginine 162, serine 190, isoleucine 243, 262 to 267, and glutamine 287; these read TGG and ALTVSE.

This sequence belongs to the glycosyltransferase 28 family. MurG subfamily.

The protein resides in the cell inner membrane. It catalyses the reaction di-trans,octa-cis-undecaprenyl diphospho-N-acetyl-alpha-D-muramoyl-L-alanyl-D-glutamyl-meso-2,6-diaminopimeloyl-D-alanyl-D-alanine + UDP-N-acetyl-alpha-D-glucosamine = di-trans,octa-cis-undecaprenyl diphospho-[N-acetyl-alpha-D-glucosaminyl-(1-&gt;4)]-N-acetyl-alpha-D-muramoyl-L-alanyl-D-glutamyl-meso-2,6-diaminopimeloyl-D-alanyl-D-alanine + UDP + H(+). Its pathway is cell wall biogenesis; peptidoglycan biosynthesis. Functionally, cell wall formation. Catalyzes the transfer of a GlcNAc subunit on undecaprenyl-pyrophosphoryl-MurNAc-pentapeptide (lipid intermediate I) to form undecaprenyl-pyrophosphoryl-MurNAc-(pentapeptide)GlcNAc (lipid intermediate II). The chain is UDP-N-acetylglucosamine--N-acetylmuramyl-(pentapeptide) pyrophosphoryl-undecaprenol N-acetylglucosamine transferase from Vibrio vulnificus (strain CMCP6).